The following is a 1356-amino-acid chain: Collagen alpha-2(I) chain (1356 aa).

Residues M1–C22 form the signal peptide. The disordered stretch occupies residues C22–R1112. Pyrrolidone carboxylic acid occurs at positions 23 and 73. A propeptide spans Q23–A72 (N-terminal propeptide). Residues G76 to G88 show a composition bias toward gly residues. An Allysine modification is found at K78. K171 bears the 5-hydroxylysine; alternate mark. An O-linked (Gal...) hydroxylysine; alternate glycan is attached at K171. Residues A219–P248 show a composition bias toward low complexity. Residues G259–G280 are compositionally biased toward gly residues. Residues I281 to P315 are compositionally biased toward low complexity. Residues F317–Q327 are compositionally biased toward pro residues. Composition is skewed to gly residues over residues G334–G343, G391–G412, G418–G427, and G448–G457. Low complexity predominate over residues P479–P489. Residues G511–G520 show a composition bias toward gly residues. Low complexity-rich tracts occupy residues N521–A564 and N587–R603. Gly residues-rich tracts occupy residues G610–G619 and G628–G646. The span at K648–L659 shows a compositional bias: basic and acidic residues. Residues L716–P731 are compositionally biased toward low complexity. Over residues G736–G745 the composition is skewed to gly residues. Low complexity-rich tracts occupy residues P746–P764 and P776–A786. The segment covering G787 to G796 has biased composition (gly residues). Over residues I797–K809 the composition is skewed to low complexity. Residues G817 to G826 are compositionally biased toward gly residues. Residues E827–Q858 are compositionally biased toward low complexity. Gly residues predominate over residues G877–G886. Positions P888–A903 are enriched in low complexity. Positions G976 to G985 are enriched in gly residues. Residues R999–M1013 show a composition bias toward basic and acidic residues. Residues A1083–A1095 are compositionally biased toward pro residues. The propeptide at D1114–K1356 is C-terminal propeptide. The Fibrillar collagen NC1 domain occupies Y1123 to K1356. Cystine bridges form between C1153-C1185, C1193-C1354, and C1262-C1307. Ca(2+)-binding residues include D1171, N1173, Q1174, C1176, and D1179. N1257 carries N-linked (GlcNAc...) asparagine glycosylation.

The protein belongs to the fibrillar collagen family. As to quaternary structure, trimers of one alpha 2(I) and two alpha 1(I) chains. Post-translationally, prolines at the third position of the tripeptide repeating unit (G-X-Y) are hydroxylated in some or all of the chains. In terms of tissue distribution, forms the fibrils of tendon, ligaments and bones. In bones the fibrils are mineralized with calcium hydroxyapatite.

It localises to the secreted. It is found in the extracellular space. The protein resides in the extracellular matrix. Type I collagen is a member of group I collagen (fibrillar forming collagen). This is Collagen alpha-2(I) chain (col1a2) from Oncorhynchus mykiss (Rainbow trout).